The chain runs to 1323 residues: Sister chromatid cohesion protein PDS5 homolog A-B (1323 aa).

Residues 385–421 form an HEAT repeat; the sequence is FLVNDQLLGFVRERTLDKRWRVRKEAMMGLAQLYKKY. Positions 1138–1323 are disordered; that stretch reads PLNATGRRPY…TAQRQIDLHR (186 aa). Positions 1153–1165 are enriched in low complexity; the sequence is SEISNNVSINSES. Polar residues-rich tracts occupy residues 1166-1176 and 1210-1220; these read DASVANRQSSE and LDQTAPSNTGT. Residues 1235 to 1246 show a composition bias toward basic and acidic residues; that stretch reads NIRKESEEKKVD.

As to quaternary structure, interacts with the cohesin complex. Binds chromatin in a cohesin-dependent manner.

Its subcellular location is the nucleus. In terms of biological role, may regulate sister chromatid cohesion during mitosis and couple it to DNA replication. In Xenopus laevis (African clawed frog), this protein is Sister chromatid cohesion protein PDS5 homolog A-B (pds5a-b).